The following is a 275-amino-acid chain: Large ribosomal subunit protein uL2 (275 aa).

Disordered stretches follow at residues 35–55 (EKQT…RHKG) and 223–260 (VAMN…KTRN). A compositionally biased stretch (polar residues) spans 39–49 (RSSGRNNQGRV).

Belongs to the universal ribosomal protein uL2 family. As to quaternary structure, part of the 50S ribosomal subunit. Forms a bridge to the 30S subunit in the 70S ribosome.

Its function is as follows. One of the primary rRNA binding proteins. Required for association of the 30S and 50S subunits to form the 70S ribosome, for tRNA binding and peptide bond formation. It has been suggested to have peptidyltransferase activity; this is somewhat controversial. Makes several contacts with the 16S rRNA in the 70S ribosome. The protein is Large ribosomal subunit protein uL2 of Methylococcus capsulatus (strain ATCC 33009 / NCIMB 11132 / Bath).